A 291-amino-acid polypeptide reads, in one-letter code: Kidney mitochondrial carrier protein 1 (291 aa).

At Ser-2 the chain carries N-acetylserine. Solcar repeat units lie at residues 7–96 (KPFV…LKRL), 104–189 (ETLL…TKKH), and 198–289 (DTVA…LKKL). 6 helical membrane passes run 9–26 (FVYG…TFPI), 71–89 (GIAP…KIGT), 106–124 (LLVN…SAIA), 164–183 (GVSL…LPVY), 204–224 (FLSS…VDVV), and 264–283 (GFWP…FLTY).

This sequence belongs to the mitochondrial carrier (TC 2.A.29) family. Interacts with VDAC1. Present in kidney (at protein level). Expressed predominantly within the kidney cortex in the proximal and distal tubules and at lower levels in the testis and white adipose tissue.

The protein localises to the mitochondrion inner membrane. It catalyses the reaction sulfite(in) + sulfate(out) = sulfite(out) + sulfate(in). The catalysed reaction is thiosulfate(in) + sulfate(out) = thiosulfate(out) + sulfate(in). It carries out the reaction sulfate(out) + phosphate(in) = sulfate(in) + phosphate(out). The enzyme catalyses oxalate(in) + sulfate(out) = oxalate(out) + sulfate(in). It catalyses the reaction malonate(in) + sulfate(out) = malonate(out) + sulfate(in). The catalysed reaction is maleate(in) + sulfate(out) = maleate(out) + sulfate(in). It carries out the reaction (S)-malate(in) + sulfate(out) = (S)-malate(out) + sulfate(in). The enzyme catalyses (3S)-citramalate(in) + sulfate(out) = (3S)-citramalate(out) + sulfate(in). It catalyses the reaction (3R)-citramalate(in) + sulfate(out) = (3R)-citramalate(out) + sulfate(in). The catalysed reaction is sulfate(out) + succinate(in) = sulfate(in) + succinate(out). It carries out the reaction (S,S)-tartrate(in) + sulfate(out) = (S,S)-tartrate(out) + sulfate(in). The enzyme catalyses (2R,3R)-tartrate(in) + sulfate(out) = (2R,3R)-tartrate(out) + sulfate(in). It catalyses the reaction D-aspartate(in) + sulfate(out) = D-aspartate(out) + sulfate(in). The catalysed reaction is L-aspartate(in) + sulfate(out) = L-aspartate(out) + sulfate(in). It carries out the reaction sulfate(in) = sulfate(out). The enzyme catalyses phosphate(in) = phosphate(out). It catalyses the reaction (S)-malate(out) = (S)-malate(in). In terms of biological role, antiporter that transports inorganic anions (sulfate, sulfite, thiosulfate and phosphate) and, to a lesser extent, a variety of dicarboxylates (e.g. malonate, malate and citramalate) and, even more so, aspartate. The sulfate/sulfate exchange is much higher than the phosphate/phosphate and malate/malate exchanges. The transport affinities is higher for sulfate and thiosulfate than for any other substrate. May catalyze the export of sulfite and thiosulfate (the hydrogen sulfide degradation products) from the mitochondria, thereby modulating the level of the hydrogen sulfide. Also may mediate a very low unidirectional transport of sulfate, phosphate and (S)-malate. This is Kidney mitochondrial carrier protein 1 from Mus musculus (Mouse).